Reading from the N-terminus, the 442-residue chain is tRNA-2-methylthio-N(6)-dimethylallyladenosine synthase (442 aa).

Positions 5 to 122 constitute an MTTase N-terminal domain; it reads KRIFIKTFGC…LPDMIESKRR (118 aa). 6 residues coordinate [4Fe-4S] cluster: C14, C51, C85, C159, C163, and C166. The Radical SAM core domain maps to 145–377; sequence RVEGAAAFLS…QALNEAQGKA (233 aa). Residues 380 to 442 form the TRAM domain; the sequence is ASMVGSIQRV…LSHTLRGELV (63 aa).

This sequence belongs to the methylthiotransferase family. MiaB subfamily. As to quaternary structure, monomer. [4Fe-4S] cluster is required as a cofactor.

It is found in the cytoplasm. It catalyses the reaction N(6)-dimethylallyladenosine(37) in tRNA + (sulfur carrier)-SH + AH2 + 2 S-adenosyl-L-methionine = 2-methylsulfanyl-N(6)-dimethylallyladenosine(37) in tRNA + (sulfur carrier)-H + 5'-deoxyadenosine + L-methionine + A + S-adenosyl-L-homocysteine + 2 H(+). Its function is as follows. Catalyzes the methylthiolation of N6-(dimethylallyl)adenosine (i(6)A), leading to the formation of 2-methylthio-N6-(dimethylallyl)adenosine (ms(2)i(6)A) at position 37 in tRNAs that read codons beginning with uridine. This Methylobacillus flagellatus (strain ATCC 51484 / DSM 6875 / VKM B-1610 / KT) protein is tRNA-2-methylthio-N(6)-dimethylallyladenosine synthase.